A 57-amino-acid polypeptide reads, in one-letter code: MTEVRLGENESIESALKRFKKKIQKAGILSEIKRRERYEKPSARRKRKAEAARKRRR.

The disordered stretch occupies residues 37–57 (RYEKPSARRKRKAEAARKRRR). Positions 43 to 57 (ARRKRKAEAARKRRR) are enriched in basic residues.

The protein belongs to the bacterial ribosomal protein bS21 family.

In Gloeobacter violaceus (strain ATCC 29082 / PCC 7421), this protein is Small ribosomal subunit protein bS21B.